The primary structure comprises 116 residues: Transcription elongation factor SPT4 homolog 2 (116 aa).

Residues 19-39 (CLRCRLVKTYDQFRDAGCENC) form a C4-type zinc finger.

It belongs to the SPT4 family.

It localises to the nucleus. In terms of biological role, may regulate transcription elongation by RNA polymerase II. May enhance transcriptional pausing at sites proximal to the promoter, which may in turn facilitate the assembly of an elongation competent RNA polymerase II complex. This Arabidopsis thaliana (Mouse-ear cress) protein is Transcription elongation factor SPT4 homolog 2.